A 102-amino-acid chain; its full sequence is Large ribosomal subunit protein uL24 (102 aa).

The protein belongs to the universal ribosomal protein uL24 family. As to quaternary structure, part of the 50S ribosomal subunit.

One of two assembly initiator proteins, it binds directly to the 5'-end of the 23S rRNA, where it nucleates assembly of the 50S subunit. Functionally, one of the proteins that surrounds the polypeptide exit tunnel on the outside of the subunit. In Limosilactobacillus reuteri (strain DSM 20016) (Lactobacillus reuteri), this protein is Large ribosomal subunit protein uL24.